A 307-amino-acid chain; its full sequence is Nicotinamide/nicotinic acid mononucleotide adenylyltransferase 2 (307 aa).

NAD(+) is bound by residues Ser-16 and Phe-17. An ATP-binding site is contributed by His-24. Positions 92 and 95 each coordinate NAD(+). S-palmitoyl cysteine attachment occurs at residues Cys-164 and Cys-165. Gly-200, Asp-202, Leu-212, Trp-213, and Arg-232 together coordinate NAD(+). Residue 271–274 coordinates ATP; sequence TKSR.

It belongs to the eukaryotic NMN adenylyltransferase family. As to quaternary structure, monomer. Requires Mg(2+) as cofactor. In terms of processing, degraded in response to injured neurite. Degradation is caused by polyubiquitination by MYCBP2 after recognition by FBXO45. Palmitoylated; palmitoylation is required for membrane association.

Its subcellular location is the golgi apparatus membrane. The protein localises to the cytoplasmic vesicle membrane. The protein resides in the cytoplasm. It localises to the cell projection. It is found in the axon. The enzyme catalyses beta-nicotinamide D-ribonucleotide + ATP + H(+) = diphosphate + NAD(+). The catalysed reaction is nicotinate beta-D-ribonucleotide + ATP + H(+) = deamido-NAD(+) + diphosphate. Its pathway is cofactor biosynthesis; NAD(+) biosynthesis; NAD(+) from nicotinamide D-ribonucleotide: step 1/1. It participates in cofactor biosynthesis; NAD(+) biosynthesis; deamido-NAD(+) from nicotinate D-ribonucleotide: step 1/1. Inhibited by P1-(adenosine-5')-P3-(nicotinamide-riboside-5')-triphosphate (Np3AD) and P1-(adenosine-5')-P4-(nicotinamide-riboside-5')-tetraphosphate (Np4AD). Functionally, nicotinamide/nicotinate-nucleotide adenylyltransferase that acts as an axon maintenance factor. Axon survival factor required for the maintenance of healthy axons: acts by delaying Wallerian axon degeneration, an evolutionarily conserved process that drives the loss of damaged axons. Catalyzes the formation of NAD(+) from nicotinamide mononucleotide (NMN) and ATP. Can also use the deamidated form; nicotinic acid mononucleotide (NaMN) as substrate but with a lower efficiency. Cannot use triazofurin monophosphate (TrMP) as substrate. Also catalyzes the reverse reaction, i.e. the pyrophosphorolytic cleavage of NAD(+). For the pyrophosphorolytic activity prefers NAD(+), NADH and NaAD as substrates and degrades nicotinic acid adenine dinucleotide phosphate (NHD) less effectively. Fails to cleave phosphorylated dinucleotides NADP(+), NADPH and NaADP(+). Also acts as an activator of ADP-ribosylation by supporting the catalytic activity of PARP16 and promoting mono-ADP-ribosylation of ribosomes by PARP16. May be involved in the maintenance of axonal integrity. This Rattus norvegicus (Rat) protein is Nicotinamide/nicotinic acid mononucleotide adenylyltransferase 2 (Nmnat2).